We begin with the raw amino-acid sequence, 963 residues long: Ubiquitin carboxyl-terminal hydrolase 4 (963 aa).

A DUSP domain is found at 11–122 (PDAETQKSEL…GQQPIVRKVV (112 aa)). The necessary for interaction with SART3 stretch occupies residues 27-216 (TLQRGAQWYL…LYLGQVLVIE (190 aa)). A Nuclear export signal motif is present at residues 133–141 (VEVYLLELK). In terms of domain architecture, Ubiquitin-like 1 spans 142-226 (LCENSDPTNV…PQNEDGTWPR (85 aa)). The disordered stretch occupies residues 220–255 (EDGTWPRQTLQSKSSTAPSRNFTTSPKSSASPYSSV). Positions 225 to 243 (PRQTLQSKSSTAPSRNFTT) are enriched in polar residues. Residues 229-295 (LQSKSSTAPS…SYNCQEPPSS (67 aa)) form a required for USP4 activation by providing conformational flexibility between the DUSP and catalytic domains region. Residues 244 to 255 (SPKSSASPYSSV) show a composition bias toward low complexity. Residues 302–923 (CGLGNLGNTC…AAYVLFYQRR (622 aa)) enclose the USP domain. Cys-311 serves as the catalytic Nucleophile. The segment at 384 to 386 (PQF) is regulates ubiquitin dissociation. A necessary for interaction with RBL2 region spans residues 405 to 407 (LHE). Residue Ser-445 is modified to Phosphoserine. The tract at residues 459–463 (LVCPE) is necessary for interaction with RB1 and RBL2. 2 residues coordinate Zn(2+): Cys-461 and Cys-464. Residues 483 to 571 (LKKDRVMEVF…IFVYEVCSTS (89 aa)) enclose the Ubiquitin-like 2 domain. Positions 485 to 775 (KDRVMEVFLV…LQPQKKKKTT (291 aa)) are interacts with DUSP and ubiquitin-like 1 domains and is required for USP4 activation. A disordered region spans residues 637 to 698 (DEFGSSPLEP…PSETTQKKIK (62 aa)). A Phosphoserine modification is found at Ser-655. Over residues 657–666 (EGEDEEEMEH) the composition is skewed to acidic residues. Phosphoserine is present on residues Ser-675 and Ser-680. A Nuclear localization signal motif is present at residues 767 to 772 (QPQKKK). Cys-799 and Cys-802 together coordinate Zn(2+). Residue His-881 is the Proton acceptor of the active site. The disordered stretch occupies residues 928–963 (YKTPSLSSSGSSDGGTRPSSSQQGLGDDEACSMDTN). The span at 932–948 (SLSSSGSSDGGTRPSSS) shows a compositional bias: low complexity. Residues 953–963 (GDDEACSMDTN) are compositionally biased toward acidic residues.

It belongs to the peptidase C19 family. USP4 subfamily. In terms of assembly, interacts with RB1 (both dephosphorylated and hypophosphorylated forms). Interacts with RBL1 and RBL2. Interacts with ADORA2A (via cytoplasmic C-terminus); the interaction is direct. Interacts with SART3; recruits USP4 to its substrate PRPF3. Phosphorylated at Ser-445 by PKB/AKT1 in response to EGF stimulus, promoting its ability deubiquitinate RHEB. In terms of processing, monoubiquitinated by TRIM21. Ubiquitination does not lead to its proteasomal degradation. Autodeubiquitinated.

It is found in the cytoplasm. The protein localises to the nucleus. The enzyme catalyses Thiol-dependent hydrolysis of ester, thioester, amide, peptide and isopeptide bonds formed by the C-terminal Gly of ubiquitin (a 76-residue protein attached to proteins as an intracellular targeting signal).. Its activity is regulated as follows. The completion of the deubiquitinase reaction is mediated by the DUSP and ubiquitin-like 1 domains which promotes the release of ubiquitin from the catalytic site enabling subsequent reactions to occur. Functionally, deubiquitinating enzyme that removes conjugated ubiquitin from target proteins. Deubiquitinates PDPK1. Deubiquitinates TRIM21. Deubiquitinates receptor ADORA2A which increases the amount of functional receptor at the cell surface. Deubiquitinates HAS2. Deubiquitinates RHEB in response to EGF signaling, promoting mTORC1 signaling. May regulate mRNA splicing through deubiquitination of the U4 spliceosomal protein PRPF3. This may prevent its recognition by the U5 component PRPF8 thereby destabilizing interactions within the U4/U6.U5 snRNP. May also play a role in the regulation of quality control in the ER. This chain is Ubiquitin carboxyl-terminal hydrolase 4 (USP4), found in Pongo abelii (Sumatran orangutan).